Here is a 79-residue protein sequence, read N- to C-terminus: Orally active insecticidal peptide (79 aa).

The first 19 residues, 1–19 (MRVLFIIAGLALLSVVCYT), serve as a signal peptide directing secretion. A propeptide spanning residues 20–44 (SEMKERSSFNEVLSEFFAADEPQER) is cleaved from the precursor. Cystine bridges form between Cys46–Cys61, Cys53–Cys66, and Cys60–Cys73. Ala77 carries the post-translational modification Alanine amide.

The protein belongs to the neurotoxin 03 (Tx2) family. 01 subfamily. In terms of tissue distribution, expressed by the venom gland.

The protein localises to the secreted. Probable ion channel inhibitor. Shows insecticidal activity when injected into mealworms. The polypeptide is Orally active insecticidal peptide (Selenotypus plumipes (Australian featherleg tarantula)).